The primary structure comprises 783 residues: Cilia- and flagella-associated protein 91 (783 aa).

Positions 748–760 (EDFELEEEAESLD) are enriched in acidic residues. The disordered stretch occupies residues 748–783 (EDFELEEEAESLDSEVPTVSVSKTSTIKPTQDEGEG). Over residues 764 to 776 (PTVSVSKTSTIKP) the composition is skewed to polar residues.

The protein belongs to the CFAP91 family. Part of a complex containing MYCBP, AKAP1 and PRKAR2B. Interacts with MYCBP and AKAP1. Interacts with CFAP61. Post-translationally, phosphorylated by PKA. In terms of tissue distribution, expressed in the testis, in cells involved in spermatogenesis.

The protein localises to the cytoplasm. The protein resides in the mitochondrion. It localises to the cytoskeleton. It is found in the cilium axoneme. Its function is as follows. Involved in sperm flagellum axonemal organization and function. May regulate cilium motility through its role in the assembly of the axonemal radial spokes. This Mus musculus (Mouse) protein is Cilia- and flagella-associated protein 91.